We begin with the raw amino-acid sequence, 282 residues long: tRNA U34 carboxymethyltransferase (282 aa).

Residues K54, W68, K73, G92, 114-116 (DPS), Y161, and R276 contribute to the carboxy-S-adenosyl-L-methionine site.

This sequence belongs to the class I-like SAM-binding methyltransferase superfamily. CmoB family. In terms of assembly, homotetramer.

The enzyme catalyses carboxy-S-adenosyl-L-methionine + 5-hydroxyuridine(34) in tRNA = 5-carboxymethoxyuridine(34) in tRNA + S-adenosyl-L-homocysteine + H(+). Functionally, catalyzes carboxymethyl transfer from carboxy-S-adenosyl-L-methionine (Cx-SAM) to 5-hydroxyuridine (ho5U) to form 5-carboxymethoxyuridine (cmo5U) at position 34 in tRNAs. In Campylobacter fetus subsp. fetus (strain 82-40), this protein is tRNA U34 carboxymethyltransferase.